The primary structure comprises 155 residues: Aspartate carbamoyltransferase regulatory chain (155 aa).

The Zn(2+) site is built by Cys113, Cys118, Cys139, and Cys142.

It belongs to the PyrI family. Contains catalytic and regulatory chains. Zn(2+) serves as cofactor.

Its function is as follows. Involved in allosteric regulation of aspartate carbamoyltransferase. This is Aspartate carbamoyltransferase regulatory chain from Methanospirillum hungatei JF-1 (strain ATCC 27890 / DSM 864 / NBRC 100397 / JF-1).